The chain runs to 427 residues: Peptidase B (427 aa).

Positions 195 and 200 each coordinate Mn(2+). Residue Lys207 is part of the active site. Mn(2+) is bound by residues Asp218, Asp277, and Glu279. Arg281 is a catalytic residue.

Belongs to the peptidase M17 family. Homohexamer. It depends on Mn(2+) as a cofactor.

The protein resides in the cytoplasm. It carries out the reaction Release of an N-terminal amino acid, Xaa, from a peptide or arylamide. Xaa is preferably Glu or Asp but may be other amino acids, including Leu, Met, His, Cys and Gln.. In terms of biological role, probably plays an important role in intracellular peptide degradation. The chain is Peptidase B from Escherichia coli O157:H7.